A 478-amino-acid chain; its full sequence is Pyrrolysine--tRNA ligase (478 aa).

Residues 106 to 188 form a disordered region; the sequence is VMPKSVARTP…TSAMPASTSA (83 aa). The segment covering 122-132 has biased composition (polar residues); sequence APVQTLPSESQ. Low complexity predominate over residues 133-188; it reads PAPTTPISASTTAPASTSTTAPAPASTTAPAPASTTAPASASTTISTSAMPASTSA.

The protein belongs to the class-II aminoacyl-tRNA synthetase family.

The protein localises to the cytoplasm. The catalysed reaction is tRNA(Pyl) + L-pyrrolysine + ATP = L-pyrrolysyl-tRNA(Pyl) + AMP + diphosphate. Functionally, catalyzes the attachment of pyrrolysine to tRNA(Pyl). Pyrrolysine is a lysine derivative encoded by the termination codon UAG. The protein is Pyrrolysine--tRNA ligase of Methanosarcina thermophila.